The primary structure comprises 248 residues: Granzyme C (248 aa).

The first 18 residues, 1 to 18 (MPPVLILLTLLLPLRAGA), serve as a signal peptide directing secretion. Residues 19–20 (EE) constitute a propeptide that is removed on maturation. Positions 21–246 (IIGGNEISPH…FVSWIKKTMK (226 aa)) constitute a Peptidase S1 domain. A disulfide bridge connects residues cysteine 50 and cysteine 66. Residues histidine 65 and aspartate 109 each act as charge relay system in the active site. 2 disulfides stabilise this stretch: cysteine 143–cysteine 210 and cysteine 174–cysteine 189. The active-site Charge relay system is serine 204.

This sequence belongs to the peptidase S1 family. Granzyme subfamily.

The protein resides in the cytolytic granule. Functionally, this enzyme is probably necessary for target cell lysis in cell-mediated immune responses. The polypeptide is Granzyme C (Gzmc) (Mus musculus (Mouse)).